The chain runs to 153 residues: Arachidonate 5-lipoxygenase-activating protein (153 aa).

The Lumenal portion of the chain corresponds to 1 to 8; it reads MDQETVGN. Residues 9–30 form a helical membrane-spanning segment; that stretch reads VVLLAIVTLISVVQNGFFAHKV. Over 31 to 52 the chain is Cytoplasmic; that stretch reads EHESRTQNGRSFQRTGTLAFER. The chain crosses the membrane as a helical span at residues 53–77; that stretch reads VYTANQNCVDAYPTFLAVLWSAGLL. Residues 78–80 lie on the Lumenal side of the membrane; it reads CSQ. A helical membrane pass occupies residues 81–102; sequence VPAAFAGLMYLLVRQKYFVGYL. Residues 103–107 lie on the Cytoplasmic side of the membrane; sequence GERTQ. Residues 108–115 lie within the membrane without spanning it; that stretch reads STPGYIFG. A helical membrane pass occupies residues 116-128; that stretch reads KRIILFLFLMSVA. At 129-153 the chain is on the lumenal side; sequence GIFNYYLIFFFGSDFENYIKTVTTT.

The protein belongs to the MAPEG family. Homotrimer. Interacts with LTC4S and ALOX5.

It is found in the nucleus membrane. The protein localises to the endoplasmic reticulum membrane. Functionally, required for leukotriene biosynthesis by ALOX5 (5-lipoxygenase). Anchors ALOX5 to the membrane. Binds arachidonic acid, and could play an essential role in the transfer of arachidonic acid to ALOX5. Binds to MK-886, a compound that blocks the biosynthesis of leukotrienes. This is Arachidonate 5-lipoxygenase-activating protein (ALOX5AP) from Macaca mulatta (Rhesus macaque).